A 325-amino-acid chain; its full sequence is Aerobic respiration control sensor protein ArcB homolog (325 aa).

Over Met1–Leu26 the chain is Cytoplasmic. A helical membrane pass occupies residues Gly27–Val47. Residues His48–Arg57 lie on the Periplasmic side of the membrane. A helical transmembrane segment spans residues Ser58–Glu78. Residues Lys79–Ser325 lie on the Cytoplasmic side of the membrane. Residues Thr128–Ser325 enclose the Histidine kinase domain. His131 is modified (phosphohistidine; by autocatalysis).

It is found in the cell inner membrane. It catalyses the reaction ATP + protein L-histidine = ADP + protein N-phospho-L-histidine.. Its function is as follows. Member of the two-component regulatory system ArcB/ArcA. Activates ArcA by phosphorylation. The chain is Aerobic respiration control sensor protein ArcB homolog (arcB) from Haemophilus influenzae (strain ATCC 51907 / DSM 11121 / KW20 / Rd).